Reading from the N-terminus, the 297-residue chain is Acetylglutamate kinase (297 aa).

Residues 70–71, Arg-92, and Asn-194 each bind substrate; that span reads GG.

This sequence belongs to the acetylglutamate kinase family. ArgB subfamily.

It is found in the cytoplasm. It carries out the reaction N-acetyl-L-glutamate + ATP = N-acetyl-L-glutamyl 5-phosphate + ADP. It functions in the pathway amino-acid biosynthesis; L-arginine biosynthesis; N(2)-acetyl-L-ornithine from L-glutamate: step 2/4. In terms of biological role, catalyzes the ATP-dependent phosphorylation of N-acetyl-L-glutamate. The polypeptide is Acetylglutamate kinase (Janthinobacterium sp. (strain Marseille) (Minibacterium massiliensis)).